We begin with the raw amino-acid sequence, 111 residues long: MEARAIAKYVRMSPRKVRVVLDLVRGKNVSEAFAILKYTPKDAATVVLKVLKSAVANAENNFNLDVNKLYIAEAYANQGPTLKRFKPRAQGRAYSIMKRTSHVTLVVKERA.

It belongs to the universal ribosomal protein uL22 family. In terms of assembly, part of the 50S ribosomal subunit.

Functionally, this protein binds specifically to 23S rRNA; its binding is stimulated by other ribosomal proteins, e.g. L4, L17, and L20. It is important during the early stages of 50S assembly. It makes multiple contacts with different domains of the 23S rRNA in the assembled 50S subunit and ribosome. In terms of biological role, the globular domain of the protein is located near the polypeptide exit tunnel on the outside of the subunit, while an extended beta-hairpin is found that lines the wall of the exit tunnel in the center of the 70S ribosome. The protein is Large ribosomal subunit protein uL22 of Clostridium novyi (strain NT).